The primary structure comprises 336 residues: Flavonol synthase/flavanone 3-hydroxylase (336 aa).

Residues 99–118 (EKESVAKPEDSKDIEGYGTK) are disordered. The Fe2OG dioxygenase domain maps to 196–296 (MAEYMMKINY…RMSWPVFLEP (101 aa)). Position 204-206 (204-206 (NYY)) interacts with 2-oxoglutarate. 3 residues coordinate Fe cation: histidine 221, aspartate 223, and histidine 277. Residue 287–289 (RMS) coordinates 2-oxoglutarate.

Belongs to the iron/ascorbate-dependent oxidoreductase family. L-ascorbate is required as a cofactor. The cofactor is Fe(2+). As to expression, expressed in young seedlings (at protein level). Expressed in roots, emerging leaves, shoot-root transition zone, trichomes, flowers and siliques. In cotyledons, expressed mostly on the adaxial side and only in guard cells on the abaxial side.

It is found in the cytoplasm. The protein localises to the nucleus. It catalyses the reaction a (2R,3R)-dihydroflavonol + 2-oxoglutarate + O2 = a flavonol + succinate + CO2 + H2O. It carries out the reaction a (2S)-flavan-4-one + 2-oxoglutarate + O2 = a (2R,3R)-dihydroflavonol + succinate + CO2. The protein operates within secondary metabolite biosynthesis; flavonoid biosynthesis. In terms of biological role, catalyzes the formation of flavonols from dihydroflavonols. It can act on dihydrokaempferol to produce kaempferol, on dihydroquercetin to produce quercitin and on dihydromyricetin to produce myricetin. In vitro catalyzes the oxidation of both enantiomers of naringenin to give both cis- and trans-dihydrokaempferol. This Arabidopsis thaliana (Mouse-ear cress) protein is Flavonol synthase/flavanone 3-hydroxylase (FLS1).